The following is a 325-amino-acid chain: Fatty acid synthase alpha subunit hexA (325 aa).

Position 209 (D209) interacts with Mg(2+). Acetyl-CoA contacts are provided by residues D209–V211, E255–T265, K279–N282, and I301–H303. S302 is a Mg(2+) binding site.

It belongs to the thiolase-like superfamily. Fungal fatty acid synthetase subunit alpha family. In terms of assembly, [Alpha(6)beta(6)] hexamers of two multifunctional subunits (alpha and beta). In terms of processing, 4'-phosphopantetheine is transferred from CoA to a specific serine of the acyl carrier domain by the C-terminal PPT domain. This modification is essential for activity because fatty acids are bound in thioester linkage to the sulfhydryl of the prosthetic group.

The catalysed reaction is acetyl-CoA + n malonyl-CoA + 2n NADPH + 4n H(+) = a long-chain-acyl-CoA + n CoA + n CO2 + 2n NADP(+).. It catalyses the reaction a fatty acyl-[ACP] + malonyl-[ACP] + H(+) = a 3-oxoacyl-[ACP] + holo-[ACP] + CO2. The enzyme catalyses a (3R)-hydroxyacyl-[ACP] + NADP(+) = a 3-oxoacyl-[ACP] + NADPH + H(+). The protein operates within mycotoxin biosynthesis. Functionally, fatty acid synthase alpha subunit; part of the fragmented gene cluster that mediates the biosynthesis of dothistromin (DOTH), a polyketide toxin very similar in structure to the aflatoxin precursor, versicolorin B. The first step of the pathway is the conversion of acetate to norsolorinic acid (NOR) and requires the fatty acid synthase subunits hexA and hexB, as well as the polyketide synthase pksA. PksA combines a hexanoyl starter unit and 7 malonyl-CoA extender units to synthesize the precursor NOR. The hexanoyl starter unit is provided to the acyl-carrier protein (ACP) domain by the fungal fatty acid synthase hexA/hexB. The second step is the conversion of NOR to averantin (AVN) and requires the norsolorinic acid ketoreductase nor1, which catalyzes the dehydration of norsolorinic acid to form (1'S)-averantin. The cytochrome P450 monooxygenase avnA then catalyzes the hydroxylation of AVN to 5'hydroxyaverantin (HAVN). The next step is performed by adhA that transforms HAVN to averufin (AVF). Averufin might then be converted to hydroxyversicolorone by cypX and avfA. Hydroxyversicolorone is further converted versiconal hemiacetal acetate (VHA) by moxY. VHA is then the substrate for the versiconal hemiacetal acetate esterase est1 to yield versiconal (VAL). Versicolorin B synthase vbsA then converts VAL to versicolorin B (VERB) by closing the bisfuran ring. Then, the activity of the versicolorin B desaturase verB leads to versicolorin A (VERA). DotB, a predicted chloroperoxidase, may perform epoxidation of the A-ring of VERA. Alternatively, a cytochrome P450, such as cypX or avnA could catalyze this step. It is also possible that another, uncharacterized, cytochrome P450 enzyme is responsible for this step. Opening of the epoxide could potentially be achieved by the epoxide hydrolase epoA. However, epoA seems not to be required for DOTH biosynthesis, but other epoxide hydrolases may have the ability to complement this hydrolysis. Alternatively, opening of the epoxide ring could be achieved non-enzymatically. The next step is the deoxygenation of ring A to yield the 5,8-dihydroxyanthraquinone which is most likely catalyzed by the NADPH dehydrogenase encoded by ver1. The last stages of DOTH biosynthesis are proposed to involve hydroxylation of the bisfuran. OrdB and norB might have oxidative roles here. An alternative possibility is that cytochrome P450 monoogenases such as avnA and cypX might perform these steps in addition to previously proposed steps. The polypeptide is Fatty acid synthase alpha subunit hexA (Dothistroma septosporum (Red band needle blight fungus)).